Consider the following 297-residue polypeptide: B-lymphocyte antigen CD20 (297 aa).

Residues 1-56 (MTTPRNSVNGTFPAEPMKGPIAMQSGPKPLFRRMSSLVGPTQSFFMRESKTLGAVQ) lie on the Cytoplasmic side of the membrane. Phosphoserine is present on Ser36. Residues 57–78 (IMNGLFHIALGGLLMIPAGIYA) traverse the membrane as a helical segment. Residues 74–80 (AGIYAPI) are epitope 1. Over 79–84 (PICVTV) the chain is Extracellular. The chain crosses the membrane as a helical span at residues 85 to 105 (WYPLWGGIMYIISGSLLAATE). Residues 106–120 (KNSRKCLVKGKMIMN) are Cytoplasmic-facing. Cys111 carries S-palmitoyl cysteine lipidation. The chain crosses the membrane as a helical span at residues 121 to 141 (SLSLFAAISGMILSIMDILNI). Residues 142–188 (KISHFLKMESLNFIRAHTPYINIYNCEPANPSEKNSPSTQYCYSIQS) lie on the Extracellular side of the membrane. Positions 146–160 (FLKMESLNFIRAHTP) are epitope 2. Cys167 and Cys183 are disulfide-bonded. The segment at 168 to 175 (EPANPSEK) is epitope 3 (recognized by antibodies, including Rituximab). A helical membrane pass occupies residues 189-209 (LFLGILSVMLIFAFFQELVIA). The Cytoplasmic segment spans residues 210–297 (GIVENEWKRT…SSPIENDSSP (88 aa)). Residue Cys220 is the site of S-palmitoyl cysteine attachment. Phosphoserine is present on Ser225. Thr239 is modified (phosphothreonine). Residues 247–297 (VGLTETSSQPKNEEDIEIIPIQEEEEEETETNFPEPPQDQESSPIENDSSP) form a disordered region. The span at 260–276 (EDIEIIPIQEEEEEETE) shows a compositional bias: acidic residues. Residues 285–297 (DQESSPIENDSSP) are compositionally biased toward polar residues.

It belongs to the MS4A family. As to quaternary structure, forms homotetramers. Interacts with the heavy and light chains of cell surface IgM, the antigen-binding components of the BCR. Post-translationally, phosphorylated on serines and threonines in resting B-cells. Protein kinase C/PKC can use CD20 as substrate. Expressed on B-cells.

It localises to the cell membrane. Its function is as follows. B-lymphocyte-specific membrane protein that plays a role in the regulation of cellular calcium influx necessary for the development, differentiation, and activation of B-lymphocytes. Functions as a store-operated calcium (SOC) channel component promoting calcium influx after activation by the B-cell receptor/BCR. In Homo sapiens (Human), this protein is B-lymphocyte antigen CD20 (MS4A1).